The following is a 446-amino-acid chain: Tubulin alpha chain-like 3 (446 aa).

Positions 1 to 4 (MREC) match the MREC motif motif. Positions 11, 78, 147, 151, 152, 186, 213, and 235 each coordinate GTP. A Mg(2+)-binding site is contributed by glutamate 78. Glutamate 261 is a catalytic residue.

It belongs to the tubulin family. As to quaternary structure, dimer of alpha and beta chains. A typical microtubule is a hollow water-filled tube with an outer diameter of 25 nm and an inner diameter of 15 nM. Alpha-beta heterodimers associate head-to-tail to form protofilaments running lengthwise along the microtubule wall with the beta-tubulin subunit facing the microtubule plus end conferring a structural polarity. Microtubules usually have 13 protofilaments but different protofilament numbers can be found in some organisms and specialized cells. The cofactor is Mg(2+). Post-translationally, some glutamate residues at the C-terminus are polyglycylated, resulting in polyglycine chains on the gamma-carboxyl group. Glycylation is mainly limited to tubulin incorporated into axonemes (cilia and flagella) whereas glutamylation is prevalent in neuronal cells, centrioles, axonemes, and the mitotic spindle. Both modifications can coexist on the same protein on adjacent residues, and lowering polyglycylation levels increases polyglutamylation, and reciprocally. Cilia and flagella glycylation is required for their stability and maintenance. Flagella glycylation controls sperm motility. In terms of processing, some glutamate residues at the C-terminus are polyglutamylated, resulting in polyglutamate chains on the gamma-carboxyl group. Polyglutamylation plays a key role in microtubule severing by spastin (SPAST). SPAST preferentially recognizes and acts on microtubules decorated with short polyglutamate tails: severing activity by SPAST increases as the number of glutamates per tubulin rises from one to eight, but decreases beyond this glutamylation threshold. Glutamylation is also involved in cilia motility.

Its subcellular location is the cytoplasm. It localises to the cytoskeleton. It catalyses the reaction GTP + H2O = GDP + phosphate + H(+). Functionally, tubulin is the major constituent of microtubules, a cylinder consisting of laterally associated linear protofilaments composed of alpha- and beta-tubulin heterodimers. Microtubules grow by the addition of GTP-tubulin dimers to the microtubule end, where a stabilizing cap forms. Below the cap, tubulin dimers are in GDP-bound state, owing to GTPase activity of alpha-tubulin. This Mus musculus (Mouse) protein is Tubulin alpha chain-like 3 (Tubal3).